A 136-amino-acid chain; its full sequence is Holo-[acyl-carrier-protein] synthase (136 aa).

Positions 8 and 57 each coordinate Mg(2+).

It belongs to the P-Pant transferase superfamily. AcpS family. The cofactor is Mg(2+).

It is found in the cytoplasm. The catalysed reaction is apo-[ACP] + CoA = holo-[ACP] + adenosine 3',5'-bisphosphate + H(+). Its function is as follows. Transfers the 4'-phosphopantetheine moiety from coenzyme A to a Ser of acyl-carrier-protein. The sequence is that of Holo-[acyl-carrier-protein] synthase from Azorhizobium caulinodans (strain ATCC 43989 / DSM 5975 / JCM 20966 / LMG 6465 / NBRC 14845 / NCIMB 13405 / ORS 571).